The sequence spans 123 residues: Large ribosomal subunit protein uL18 (123 aa).

It belongs to the universal ribosomal protein uL18 family. In terms of assembly, part of the 50S ribosomal subunit; part of the 5S rRNA/L5/L18/L25 subcomplex. Contacts the 5S and 23S rRNAs.

In terms of biological role, this is one of the proteins that bind and probably mediate the attachment of the 5S RNA into the large ribosomal subunit, where it forms part of the central protuberance. In Chlamydia caviae (strain ATCC VR-813 / DSM 19441 / 03DC25 / GPIC) (Chlamydophila caviae), this protein is Large ribosomal subunit protein uL18.